A 402-amino-acid polypeptide reads, in one-letter code: p-cumate 2,3-dioxygenase system, ferredoxin--NAD(+) reductase component (402 aa).

The FAD site is built by alanine 16, lysine 51, valine 83, arginine 131, and aspartate 275.

The protein belongs to the FAD-dependent oxidoreductase family. The p-cumate 2,3-dioxygenase multicomponent enzyme system is composed of an electron transfer component and a dioxygenase component (iron sulfur protein (ISP)). The electron transfer component is composed of a ferredoxin reductase (CmtAa) and a ferredoxin (CmtAd), and the dioxygenase component is formed of a large alpha subunit (CmtAb) and a small beta subunit (CmtAc). FAD is required as a cofactor.

The enzyme catalyses 2 reduced [2Fe-2S]-[ferredoxin] + NAD(+) + H(+) = 2 oxidized [2Fe-2S]-[ferredoxin] + NADH. Its pathway is aromatic compound metabolism; p-cumate degradation; acetaldehyde and pyruvate from p-cumate. In terms of biological role, component of the p-cumate 2,3-dioxygenase multicomponent enzyme system which catalyzes the incorporation of both atoms of molecular oxygen into p-cumate to form cis-2,3-dihydroxy-2,3-dihydro-p-cumate. Ferredoxin reductase catalyzes the transfer of electrons from NADH to ferredoxin (CmtAd). The polypeptide is p-cumate 2,3-dioxygenase system, ferredoxin--NAD(+) reductase component (Pseudomonas putida (Arthrobacter siderocapsulatus)).